We begin with the raw amino-acid sequence, 121 residues long: Ribonuclease P protein component (121 aa).

The protein belongs to the RnpA family. As to quaternary structure, consists of a catalytic RNA component (M1 or rnpB) and a protein subunit.

The enzyme catalyses Endonucleolytic cleavage of RNA, removing 5'-extranucleotides from tRNA precursor.. Functionally, RNaseP catalyzes the removal of the 5'-leader sequence from pre-tRNA to produce the mature 5'-terminus. It can also cleave other RNA substrates such as 4.5S RNA. The protein component plays an auxiliary but essential role in vivo by binding to the 5'-leader sequence and broadening the substrate specificity of the ribozyme. This is Ribonuclease P protein component from Coxiella burnetii (strain Dugway 5J108-111).